The chain runs to 412 residues: CinA-like protein (412 aa).

This sequence belongs to the CinA family.

This is CinA-like protein from Kosmotoga olearia (strain ATCC BAA-1733 / DSM 21960 / TBF 19.5.1).